Consider the following 474-residue polypeptide: tRNA-2-methylthio-N(6)-dimethylallyladenosine synthase (474 aa).

Residues 3-120 enclose the MTTase N-terminal domain; that stretch reads QKLHIKTWGC…LPEMINQIRG (118 aa). [4Fe-4S] cluster contacts are provided by Cys12, Cys49, Cys83, Cys157, Cys161, and Cys164. The region spanning 143–375 is the Radical SAM core domain; it reads KAEGPTAFVS…QQRINNQAAK (233 aa). A TRAM domain is found at 378-441; sequence RAMLGTEQRV…TNSLRGDVIR (64 aa).

The protein belongs to the methylthiotransferase family. MiaB subfamily. Monomer. [4Fe-4S] cluster is required as a cofactor.

The protein resides in the cytoplasm. The enzyme catalyses N(6)-dimethylallyladenosine(37) in tRNA + (sulfur carrier)-SH + AH2 + 2 S-adenosyl-L-methionine = 2-methylsulfanyl-N(6)-dimethylallyladenosine(37) in tRNA + (sulfur carrier)-H + 5'-deoxyadenosine + L-methionine + A + S-adenosyl-L-homocysteine + 2 H(+). Its function is as follows. Catalyzes the methylthiolation of N6-(dimethylallyl)adenosine (i(6)A), leading to the formation of 2-methylthio-N6-(dimethylallyl)adenosine (ms(2)i(6)A) at position 37 in tRNAs that read codons beginning with uridine. The sequence is that of tRNA-2-methylthio-N(6)-dimethylallyladenosine synthase from Actinobacillus succinogenes (strain ATCC 55618 / DSM 22257 / CCUG 43843 / 130Z).